Consider the following 309-residue polypeptide: Protein FdhE (309 aa).

Belongs to the FdhE family.

Its subcellular location is the cytoplasm. Its function is as follows. Necessary for formate dehydrogenase activity. The sequence is that of Protein FdhE from Escherichia coli O45:K1 (strain S88 / ExPEC).